A 134-amino-acid chain; its full sequence is ATP synthase epsilon chain (134 aa).

The protein belongs to the ATPase epsilon chain family. In terms of assembly, F-type ATPases have 2 components, CF(1) - the catalytic core - and CF(0) - the membrane proton channel. CF(1) has five subunits: alpha(3), beta(3), gamma(1), delta(1), epsilon(1). CF(0) has three main subunits: a, b and c.

Its subcellular location is the cell inner membrane. Functionally, produces ATP from ADP in the presence of a proton gradient across the membrane. In Nitratidesulfovibrio vulgaris (strain DSM 19637 / Miyazaki F) (Desulfovibrio vulgaris), this protein is ATP synthase epsilon chain.